The sequence spans 155 residues: Endoribonuclease YbeY (155 aa).

Zn(2+)-binding residues include His119, His123, and His129.

It belongs to the endoribonuclease YbeY family. It depends on Zn(2+) as a cofactor.

The protein localises to the cytoplasm. Functionally, single strand-specific metallo-endoribonuclease involved in late-stage 70S ribosome quality control and in maturation of the 3' terminus of the 16S rRNA. The chain is Endoribonuclease YbeY from Mycoplasmopsis synoviae (strain 53) (Mycoplasma synoviae).